The primary structure comprises 934 residues: LPS-assembly protein LptD (934 aa).

The N-terminal stretch at M1–A33 is a signal peptide. Positions K52–P86 are disordered.

The protein belongs to the LptD family. In terms of assembly, component of the lipopolysaccharide transport and assembly complex. Interacts with LptE and LptA.

The protein resides in the cell outer membrane. Together with LptE, is involved in the assembly of lipopolysaccharide (LPS) at the surface of the outer membrane. This Pseudomonas putida (strain W619) protein is LPS-assembly protein LptD.